The primary structure comprises 385 residues: 1-deoxy-D-xylulose 5-phosphate reductoisomerase (385 aa).

Residues Thr-10, Gly-11, Ser-12, Ile-13, and Asn-124 each coordinate NADPH. A 1-deoxy-D-xylulose 5-phosphate-binding site is contributed by Lys-125. Glu-126 serves as a coordination point for NADPH. Residue Asp-150 coordinates Mn(2+). Ser-151, Glu-152, Ser-176, and His-199 together coordinate 1-deoxy-D-xylulose 5-phosphate. Glu-152 is a Mn(2+) binding site. Position 205 (Gly-205) interacts with NADPH. The 1-deoxy-D-xylulose 5-phosphate site is built by Ser-212, Asn-217, Lys-218, and Glu-221. Glu-221 lines the Mn(2+) pocket.

This sequence belongs to the DXR family. Requires Mg(2+) as cofactor. Mn(2+) is required as a cofactor.

The enzyme catalyses 2-C-methyl-D-erythritol 4-phosphate + NADP(+) = 1-deoxy-D-xylulose 5-phosphate + NADPH + H(+). It functions in the pathway isoprenoid biosynthesis; isopentenyl diphosphate biosynthesis via DXP pathway; isopentenyl diphosphate from 1-deoxy-D-xylulose 5-phosphate: step 1/6. In terms of biological role, catalyzes the NADPH-dependent rearrangement and reduction of 1-deoxy-D-xylulose-5-phosphate (DXP) to 2-C-methyl-D-erythritol 4-phosphate (MEP). The sequence is that of 1-deoxy-D-xylulose 5-phosphate reductoisomerase from Clostridium botulinum (strain Alaska E43 / Type E3).